Here is a 420-residue protein sequence, read N- to C-terminus: L-rhamnose isomerase (420 aa).

The Mn(2+) site is built by histidine 262, aspartate 294, and aspartate 296.

It belongs to the rhamnose isomerase family. As to quaternary structure, homotetramer. The cofactor is Mn(2+).

The protein resides in the cytoplasm. The catalysed reaction is L-rhamnopyranose = L-rhamnulose. Its pathway is carbohydrate degradation; L-rhamnose degradation; glycerone phosphate from L-rhamnose: step 1/3. Catalyzes the interconversion of L-rhamnose and L-rhamnulose. The protein is L-rhamnose isomerase of Pectobacterium atrosepticum (strain SCRI 1043 / ATCC BAA-672) (Erwinia carotovora subsp. atroseptica).